A 198-amino-acid polypeptide reads, in one-letter code: Proteasome subunit beta type-4 (198 aa).

Met1 carries the post-translational modification N-acetylmethionine. Position 76 is a phosphoserine (Ser76).

Belongs to the peptidase T1B family. The 26S proteasome consists of a 20S proteasome core and two 19S regulatory subunits. The 20S proteasome core is composed of 28 subunits that are arranged in four stacked rings, resulting in a barrel-shaped structure. The two end rings are each formed by seven alpha subunits, and the two central rings are each formed by seven beta subunits. The catalytic chamber with the active sites is on the inside of the barrel.

It is found in the cytoplasm. Its subcellular location is the nucleus. Functionally, non-catalytic component of the proteasome which degrades poly-ubiquitinated proteins in the cytoplasm and in the nucleus. It is essential for the regulated turnover of proteins and for the removal of misfolded proteins. The proteasome is a multicatalytic proteinase complex that is characterized by its ability to cleave peptides with Arg, Phe, Tyr, Leu, and Glu adjacent to the leaving group at neutral or slightly basic pH. It has an ATP-dependent proteolytic activity. This subunit has a chymotrypsin-like activity. In Saccharomyces cerevisiae (strain ATCC 204508 / S288c) (Baker's yeast), this protein is Proteasome subunit beta type-4 (PRE1).